Here is a 118-residue protein sequence, read N- to C-terminus: Disulfide bond formation protein (118 aa).

Residues 1 to 27 form the signal peptide; the sequence is MRAKWLWMTAVGSLLITVLTAWGWAAA. A Thioredoxin domain is found at 28-114; the sequence is SSQDSKIVYV…VAEAVLRSFF (87 aa). A disulfide bridge links cysteine 42 with cysteine 45.

It belongs to the thioredoxin family.

It localises to the secreted. Its function is as follows. Stimulates the oxidation and reduction of disulfide bonds in vitro. This is Disulfide bond formation protein (bdb) from Brevibacillus choshinensis.